Reading from the N-terminus, the 178-residue chain is Nuclear transcription factor Y subunit B-2 (178 aa).

A DNA-binding region spans residues 39 to 45; that stretch reads LPIANIS. The segment at 66-77 is subunit association domain (SAD); the sequence is LQECVSEFISFV. The tract at residues 131–156 is disordered; sequence SSKAGDGSVKKDTIGPHSGASSSSAQ.

The protein belongs to the NFYB/HAP3 subunit family. In terms of assembly, heterotrimeric transcription factor composed of three components, NF-YA, NF-YB and NF-YC. NF-YB and NF-YC must interact and dimerize for NF-YA association and DNA binding. Interacts with NFYC4 and NFYC6. In terms of tissue distribution, ubiquitous.

The protein resides in the nucleus. In terms of biological role, component of the NF-Y/HAP transcription factor complex. The NF-Y complex stimulates the transcription of various genes by recognizing and binding to a CCAAT motif in promoters. May regulate the expression of photosynthetic genes, and may be involved in chloroplast and amyloplast development. The sequence is that of Nuclear transcription factor Y subunit B-2 (NFYB2) from Oryza sativa subsp. japonica (Rice).